The primary structure comprises 198 residues: MRAFVLRARSAPTDSQLFLASVGQEAHTEILAHTLMNTIFVAQSHRNDVVVYLVLESTHDFSRTICFDTRNICHIGGFHEQALLTKIAKALDISRGMTKEQTRVVDEGITVSTISFEKLVQDLAVDYQLFMMDKKGTSIREQEFVGNPCFLLTDHIPMPKKSFNTLKRLGAQKISLGPKMLFASQCVVLIHNELDINQ.

S-adenosyl-L-methionine is bound by residues Met132 and Cys186.

The protein belongs to the methyltransferase superfamily. TrmY family.

It is found in the cytoplasm. The polypeptide is Putative pseudouridine methyltransferase (Shewanella baltica (strain OS223)).